A 213-amino-acid chain; its full sequence is PRA1 family protein B2 (213 aa).

The disordered stretch occupies residues Met-1–Pro-21. 5 consecutive transmembrane segments (helical) span residues Leu-75–Leu-94, Pro-98–Phe-117, Leu-137–Leu-157, Leu-161–Phe-181, and Ala-190–Ala-210.

The protein belongs to the PRA1 family. As to quaternary structure, interacts with PRA1B1, PRA1B3, PRA1B4, PRA1B5, PRA1B6 and PRA1E.

The protein localises to the endosome membrane. In terms of biological role, may be involved in both secretory and endocytic intracellular trafficking in the endosomal/prevacuolar compartments. This chain is PRA1 family protein B2 (PRA1B2), found in Arabidopsis thaliana (Mouse-ear cress).